The sequence spans 288 residues: ATP synthase gamma chain (288 aa).

This sequence belongs to the ATPase gamma chain family. In terms of assembly, F-type ATPases have 2 components, CF(1) - the catalytic core - and CF(0) - the membrane proton channel. CF(1) has five subunits: alpha(3), beta(3), gamma(1), delta(1), epsilon(1). CF(0) has three main subunits: a, b and c.

Its subcellular location is the cell inner membrane. Its function is as follows. Produces ATP from ADP in the presence of a proton gradient across the membrane. The gamma chain is believed to be important in regulating ATPase activity and the flow of protons through the CF(0) complex. The polypeptide is ATP synthase gamma chain (Blochmanniella floridana).